The sequence spans 39 residues: Bomanin Short 3 (39 aa).

Positions 1–18 are cleaved as a signal peptide; sequence MKFLSLAFVLGLLALANA. Positions 19–23 are excised as a propeptide; it reads TPLNP. A disulfide bond links Cys32 and Cys35.

The protein belongs to the bomanin family. As to expression, hemolymph (at protein level).

Its subcellular location is the secreted. Secreted immune-induced peptide induced by Toll signaling. Has a role in resistance bacterial and fungal infections. The strength of antimicrobial activity appears to correlate with the overall level of expression. Has no activity against the fungus C.glabrata in vitro. This chain is Bomanin Short 3, found in Drosophila melanogaster (Fruit fly).